A 527-amino-acid polypeptide reads, in one-letter code: Palmitoleoyl-protein carboxylesterase NOTUM (527 aa).

The N-terminal stretch at 1–19 (MKSYLILNTLLLSLLKING) is a signal peptide. 3 N-linked (GlcNAc...) asparagine glycosylation sites follow: asparagine 64, asparagine 86, and asparagine 104. Serine 203 (charge relay system) is an active-site residue. N-linked (GlcNAc...) asparagine glycosylation occurs at asparagine 249. Catalysis depends on charge relay system residues aspartate 311 and histidine 359. Asparagine 451 carries an N-linked (GlcNAc...) asparagine glycan.

The protein belongs to the pectinacetylesterase family. Notum subfamily. In terms of tissue distribution, expressed in the anterior pole.

The protein localises to the secreted. The enzyme catalyses [Wnt protein]-O-(9Z)-hexadecenoyl-L-serine + H2O = [Wnt protein]-L-serine + (9Z)-hexadecenoate + H(+). Functionally, carboxylesterase that acts as a key negative regulator of the Wnt signaling pathway. Acts by specifically mediating depalmitoleoylation of WNT proteins. Serine palmitoleoylation of WNT proteins is required for efficient binding to frizzled receptors. Promotes head regeneration following amputation by inhibiting the Wnt signaling pathway. The chain is Palmitoleoyl-protein carboxylesterase NOTUM from Schmidtea mediterranea (Freshwater planarian flatworm).